The following is a 141-amino-acid chain: MTIMVEDIMKLLCSLSGERKMKAAVKHSGKGALVTGAMAFVGGLVGGPPGLAVGGAVGGLLGAWMTSGQFKPVPQILMELPPAEQQRLFNEAAAIIRHLEWTDAVQLTALVMGSEALQQQLLAMLVNYVTKELRAEIQYDD.

Residues 40–60 (FVGGLVGGPPGLAVGGAVGGL) form a helical membrane-spanning segment.

It belongs to the C19orf12 family.

The protein resides in the mitochondrion. It localises to the mitochondrion membrane. It is found in the endoplasmic reticulum. The protein localises to the cytoplasm. Its subcellular location is the cytosol. This chain is Protein C19orf12 (C19orf12), found in Homo sapiens (Human).